The sequence spans 424 residues: Glutamyl-tRNA(Gln) amidotransferase subunit D (424 aa).

The tract at residues 56–78 (GETANGSRNGGKGCKTNEEELPE) is disordered. Positions 84–413 (PKIAILSTGG…EKAAGMLRED (330 aa)) constitute an Asparaginase/glutaminase domain. Residues Thr94, Thr170, Asp171, and Lys247 contribute to the active site.

This sequence belongs to the asparaginase 1 family. GatD subfamily. As to quaternary structure, heterodimer of GatD and GatE.

It catalyses the reaction L-glutamyl-tRNA(Gln) + L-glutamine + ATP + H2O = L-glutaminyl-tRNA(Gln) + L-glutamate + ADP + phosphate + H(+). Allows the formation of correctly charged Gln-tRNA(Gln) through the transamidation of misacylated Glu-tRNA(Gln) in organisms which lack glutaminyl-tRNA synthetase. The reaction takes place in the presence of glutamine and ATP through an activated gamma-phospho-Glu-tRNA(Gln). The GatDE system is specific for glutamate and does not act on aspartate. The chain is Glutamyl-tRNA(Gln) amidotransferase subunit D from Methanosarcina acetivorans (strain ATCC 35395 / DSM 2834 / JCM 12185 / C2A).